The sequence spans 191 residues: MAQLFFRYGSMNSGKTIEILKVAHNYEEQNKTVAIFTSGIDDRDQVGFISSRIGLKREATPIFSDTNIFEIVANIKPKPNCVLLDESQFLEKEHVFQLAKIVDELNIPVIAYGLKNDFRNELFEGSKYLLLYADKLEEMKTICWFCAKKATMVLRVDDKGKPVYTGEQIMIGGNDHYYPVCRKCHANPPIK.

Residues 9 to 16 (GSMNSGKT) and 85 to 88 (DESQ) contribute to the ATP site. Glu-86 serves as the catalytic Proton acceptor. Zn(2+) contacts are provided by Cys-143, Cys-146, Cys-181, and Cys-184.

The protein belongs to the thymidine kinase family. In terms of assembly, homotetramer.

The protein localises to the cytoplasm. The enzyme catalyses thymidine + ATP = dTMP + ADP + H(+). The polypeptide is Thymidine kinase (Listeria monocytogenes serotype 4b (strain F2365)).